Reading from the N-terminus, the 217-residue chain is Ribose-5-phosphate isomerase A (217 aa).

Substrate-binding positions include 28 to 31 (TGST), 81 to 84 (DGAD), and 94 to 97 (KGGG). E103 (proton acceptor) is an active-site residue. A substrate-binding site is contributed by K121.

It belongs to the ribose 5-phosphate isomerase family. In terms of assembly, homodimer.

It catalyses the reaction aldehydo-D-ribose 5-phosphate = D-ribulose 5-phosphate. Its pathway is carbohydrate degradation; pentose phosphate pathway; D-ribose 5-phosphate from D-ribulose 5-phosphate (non-oxidative stage): step 1/1. In terms of biological role, catalyzes the reversible conversion of ribose-5-phosphate to ribulose 5-phosphate. This is Ribose-5-phosphate isomerase A from Aeromonas hydrophila subsp. hydrophila (strain ATCC 7966 / DSM 30187 / BCRC 13018 / CCUG 14551 / JCM 1027 / KCTC 2358 / NCIMB 9240 / NCTC 8049).